Consider the following 211-residue polypeptide: Protein-L-isoaspartate O-methyltransferase (211 aa).

Ser-60 is an active-site residue.

The protein belongs to the methyltransferase superfamily. L-isoaspartyl/D-aspartyl protein methyltransferase family.

It localises to the cytoplasm. The catalysed reaction is [protein]-L-isoaspartate + S-adenosyl-L-methionine = [protein]-L-isoaspartate alpha-methyl ester + S-adenosyl-L-homocysteine. Functionally, catalyzes the methyl esterification of L-isoaspartyl residues in peptides and proteins that result from spontaneous decomposition of normal L-aspartyl and L-asparaginyl residues. It plays a role in the repair and/or degradation of damaged proteins. The polypeptide is Protein-L-isoaspartate O-methyltransferase (Pseudomonas aeruginosa (strain LESB58)).